A 461-amino-acid chain; its full sequence is Ribosomal protein uS12 methylthiotransferase RimO (461 aa).

One can recognise an MTTase N-terminal domain in the interval 13-128 (PKVGFVSLGC…VMQHVHTHLP (116 aa)). Residues Cys-22, Cys-58, Cys-87, Cys-159, Cys-163, and Cys-166 each coordinate [4Fe-4S] cluster. The Radical SAM core domain occupies 145 to 390 (LTPRHYAYLK…MEVAEEVSAK (246 aa)). In terms of domain architecture, TRAM spans 393–461 (AKKVGKTLKV…ADGHDLWGEV (69 aa)).

Belongs to the methylthiotransferase family. RimO subfamily. It depends on [4Fe-4S] cluster as a cofactor.

The protein localises to the cytoplasm. The catalysed reaction is L-aspartate(89)-[ribosomal protein uS12]-hydrogen + (sulfur carrier)-SH + AH2 + 2 S-adenosyl-L-methionine = 3-methylsulfanyl-L-aspartate(89)-[ribosomal protein uS12]-hydrogen + (sulfur carrier)-H + 5'-deoxyadenosine + L-methionine + A + S-adenosyl-L-homocysteine + 2 H(+). Functionally, catalyzes the methylthiolation of an aspartic acid residue of ribosomal protein uS12. This is Ribosomal protein uS12 methylthiotransferase RimO from Paraburkholderia phytofirmans (strain DSM 17436 / LMG 22146 / PsJN) (Burkholderia phytofirmans).